We begin with the raw amino-acid sequence, 153 residues long: Putative pre-16S rRNA nuclease (153 aa).

The protein belongs to the YqgF nuclease family.

The protein resides in the cytoplasm. Functionally, could be a nuclease involved in processing of the 5'-end of pre-16S rRNA. The chain is Putative pre-16S rRNA nuclease from Prochlorococcus marinus (strain MIT 9301).